A 170-amino-acid polypeptide reads, in one-letter code: Acireductone dioxygenase (170 aa).

Fe(2+)-binding residues include His-99, His-101, Glu-105, and His-144. Positions 99, 101, 105, and 144 each coordinate Ni(2+).

This sequence belongs to the acireductone dioxygenase (ARD) family. In terms of assembly, monomer. The cofactor is Fe(2+). Ni(2+) is required as a cofactor.

It carries out the reaction 1,2-dihydroxy-5-(methylsulfanyl)pent-1-en-3-one + O2 = 3-(methylsulfanyl)propanoate + CO + formate + 2 H(+). The catalysed reaction is 1,2-dihydroxy-5-(methylsulfanyl)pent-1-en-3-one + O2 = 4-methylsulfanyl-2-oxobutanoate + formate + 2 H(+). The protein operates within amino-acid biosynthesis; L-methionine biosynthesis via salvage pathway; L-methionine from S-methyl-5-thio-alpha-D-ribose 1-phosphate: step 5/6. Its function is as follows. Catalyzes 2 different reactions between oxygen and the acireductone 1,2-dihydroxy-3-keto-5-methylthiopentene (DHK-MTPene) depending upon the metal bound in the active site. Fe-containing acireductone dioxygenase (Fe-ARD) produces formate and 2-keto-4-methylthiobutyrate (KMTB), the alpha-ketoacid precursor of methionine in the methionine recycle pathway. Ni-containing acireductone dioxygenase (Ni-ARD) produces methylthiopropionate, carbon monoxide and formate, and does not lie on the methionine recycle pathway. The polypeptide is Acireductone dioxygenase (Bacillus cereus (strain ZK / E33L)).